Consider the following 157-residue polypeptide: Transcriptional regulator MraZ (157 aa).

2 consecutive SpoVT-AbrB domains span residues 7 to 54 (TYEC…PMKE) and 83 to 126 (VRII…DKDL).

Belongs to the MraZ family. Forms oligomers.

The protein localises to the cytoplasm. It localises to the nucleoid. In Flavobacterium psychrophilum (strain ATCC 49511 / DSM 21280 / CIP 103535 / JIP02/86), this protein is Transcriptional regulator MraZ.